A 381-amino-acid polypeptide reads, in one-letter code: L-lactate dehydrogenase (381 aa).

The FMN hydroxy acid dehydrogenase domain occupies 1-380 (MIISASTDYR…SRDSLVRELG (380 aa)). Position 24 (Y24) interacts with substrate. Residues S106 and Q127 each contribute to the FMN site. Y129 serves as a coordination point for substrate. T155 is an FMN binding site. R164 is a substrate binding site. An FMN-binding site is contributed by K251. H275 acts as the Proton acceptor in catalysis. R278 provides a ligand contact to substrate. 306–330 (DSGIRSGLDVVRMIALGADTVLIGR) contacts FMN.

This sequence belongs to the FMN-dependent alpha-hydroxy acid dehydrogenase family. Homotetramer. The cofactor is FMN.

The protein resides in the cell inner membrane. The catalysed reaction is (S)-lactate + A = pyruvate + AH2. Functionally, catalyzes the conversion of L-lactate to pyruvate. Is coupled to the respiratory chain. In Pseudomonas putida (strain W619), this protein is L-lactate dehydrogenase.